A 269-amino-acid chain; its full sequence is Imidazoleglycerol-phosphate dehydratase 2, chloroplastic (269 aa).

A chloroplast-targeting transit peptide spans 1 to 51 (MTTAPFLFPSLSRLHSARASSFPKPPVGSGAGVAFPARPYGSSLRLRSSVM). Residues Glu-83, 109–117 (HMLDQLASH), 135–139 (HHSNE), Arg-161, and Arg-183 contribute to the substrate site. Mn(2+) is bound by residues His-109, His-135, His-136, and Glu-139. 4 residues coordinate Mn(2+): His-207, His-231, His-232, and Glu-235. Residues 231–239 (HHIIEATFK) and 261–263 (SSK) contribute to the substrate site.

Belongs to the imidazoleglycerol-phosphate dehydratase family. It depends on Mn(2+) as a cofactor.

It localises to the plastid. The protein resides in the chloroplast. It carries out the reaction D-erythro-1-(imidazol-4-yl)glycerol 3-phosphate = 3-(imidazol-4-yl)-2-oxopropyl phosphate + H2O. The protein operates within amino-acid biosynthesis; L-histidine biosynthesis; L-histidine from 5-phospho-alpha-D-ribose 1-diphosphate: step 6/9. The polypeptide is Imidazoleglycerol-phosphate dehydratase 2, chloroplastic (Triticum aestivum (Wheat)).